A 461-amino-acid polypeptide reads, in one-letter code: MAVSLWQQCIARLQDELSAQQFSMWIRPLQAEMEGDTLVIYAPNRFVLDWVRDKYLNIINQFFTEQMGADAPKLRFDIGSRPSAKPVVQATAAIRPKPAASKAVEKPTFNAPQAEPAITANHRSNINPTYQFDNFVEGKSNQLGKAAALQVSENPGGAYNPLFLYGGTGLGKTHLLHAVGNGIIKNKPDAKVVYMHSERFVQDMVKALQNNAIEEFKRYYRSVDALFIDDIQFFANKDRSQEEFFHTFNALLEGNHQIILTSDKYPKEIDGVEDRLKSRFGWGLTVAIEPPELETRVAILMRKAQESGINLPDEVAFFIAKRLRSNVRELEGALNRVIANANFTGRPITIDFVREALRDLLALQEKLVTIDNIQKTVAEYYKIKMADMLSKRRSRSVARPRQMAMALSKELTNQSLPEIGDAFGGRDHTTVLHACRKIAQLREESHDIKEDYANLIRTLSS.

Positions 1–87 are domain I, interacts with DnaA modulators; sequence MAVSLWQQCI…IGSRPSAKPV (87 aa). A domain II region spans residues 87–124; that stretch reads VVQATAAIRPKPAASKAVEKPTFNAPQAEPAITANHRS. Residues 125-341 form a domain III, AAA+ region region; it reads NINPTYQFDN…GALNRVIANA (217 aa). The ATP site is built by glycine 169, glycine 171, lysine 172, and threonine 173. Residues 342–461 form a domain IV, binds dsDNA region; that stretch reads NFTGRPITID…YANLIRTLSS (120 aa).

This sequence belongs to the DnaA family. As to quaternary structure, oligomerizes as a right-handed, spiral filament on DNA at oriC.

It localises to the cytoplasm. Functionally, plays an essential role in the initiation and regulation of chromosomal replication. ATP-DnaA binds to the origin of replication (oriC) to initiate formation of the DNA replication initiation complex once per cell cycle. Binds the DnaA box (a 9 base pair repeat at the origin) and separates the double-stranded (ds)DNA. Forms a right-handed helical filament on oriC DNA; dsDNA binds to the exterior of the filament while single-stranded (ss)DNA is stabiized in the filament's interior. The ATP-DnaA-oriC complex binds and stabilizes one strand of the AT-rich DNA unwinding element (DUE), permitting loading of DNA polymerase. After initiation quickly degrades to an ADP-DnaA complex that is not apt for DNA replication. Binds acidic phospholipids. This Shewanella piezotolerans (strain WP3 / JCM 13877) protein is Chromosomal replication initiator protein DnaA.